The primary structure comprises 1405 residues: DNA-directed RNA polymerase subunit beta' (1405 aa).

Zn(2+) is bound by residues Cys-70, Cys-72, Cys-85, and Cys-88. Positions 460, 462, and 464 each coordinate Mg(2+). The Zn(2+) site is built by Cys-814, Cys-888, Cys-895, and Cys-898.

Belongs to the RNA polymerase beta' chain family. The RNAP catalytic core consists of 2 alpha, 1 beta, 1 beta' and 1 omega subunit. When a sigma factor is associated with the core the holoenzyme is formed, which can initiate transcription. The cofactor is Mg(2+). Requires Zn(2+) as cofactor.

It catalyses the reaction RNA(n) + a ribonucleoside 5'-triphosphate = RNA(n+1) + diphosphate. Functionally, DNA-dependent RNA polymerase catalyzes the transcription of DNA into RNA using the four ribonucleoside triphosphates as substrates. In Shewanella oneidensis (strain ATCC 700550 / JCM 31522 / CIP 106686 / LMG 19005 / NCIMB 14063 / MR-1), this protein is DNA-directed RNA polymerase subunit beta'.